Consider the following 132-residue polypeptide: Large ribosomal subunit protein uL14 (132 aa).

This sequence belongs to the universal ribosomal protein uL14 family. Part of the 50S ribosomal subunit. Forms a cluster with proteins L3 and L24e, part of which may contact the 16S rRNA in 2 intersubunit bridges.

Binds to 23S rRNA. Forms part of two intersubunit bridges in the 70S ribosome. The polypeptide is Large ribosomal subunit protein uL14 (Thermoplasma acidophilum (strain ATCC 25905 / DSM 1728 / JCM 9062 / NBRC 15155 / AMRC-C165)).